Reading from the N-terminus, the 134-residue chain is Small ribosomal subunit protein bS16 (134 aa).

The interval Ala-115–Gly-134 is disordered.

Belongs to the bacterial ribosomal protein bS16 family.

This is Small ribosomal subunit protein bS16 from Chlorobaculum tepidum (strain ATCC 49652 / DSM 12025 / NBRC 103806 / TLS) (Chlorobium tepidum).